Consider the following 704-residue polypeptide: Ion-translocating oxidoreductase complex subunit C (704 aa).

4Fe-4S ferredoxin-type domains follow at residues 368 to 397 (MGAP…QQLY) and 407 to 436 (KATA…VQYF). Residues cysteine 377, cysteine 380, cysteine 383, cysteine 387, cysteine 416, cysteine 419, cysteine 422, and cysteine 426 each coordinate [4Fe-4S] cluster. The disordered stretch occupies residues 535–684 (ARAKQAAHPM…PADPRKAAVA (150 aa)). Residues 556–565 (KAAVEAAIAR) are compositionally biased toward low complexity.

Belongs to the 4Fe4S bacterial-type ferredoxin family. RnfC subfamily. As to quaternary structure, the complex is composed of six subunits: RsxA, RsxB, RsxC, RsxD, RsxE and RsxG. Requires [4Fe-4S] cluster as cofactor.

The protein resides in the cell inner membrane. In terms of biological role, part of a membrane-bound complex that couples electron transfer with translocation of ions across the membrane. Required to maintain the reduced state of SoxR. In Salmonella paratyphi C (strain RKS4594), this protein is Ion-translocating oxidoreductase complex subunit C.